A 597-amino-acid polypeptide reads, in one-letter code: Elongation factor 4 (597 aa).

One can recognise a tr-type G domain in the interval 2 to 184 (KNIRNFSIIA…EIVAKIPAPA (183 aa)). Residues 14-19 (DHGKST) and 131-134 (NKID) contribute to the GTP site.

The protein belongs to the TRAFAC class translation factor GTPase superfamily. Classic translation factor GTPase family. LepA subfamily.

It localises to the cell inner membrane. The enzyme catalyses GTP + H2O = GDP + phosphate + H(+). In terms of biological role, required for accurate and efficient protein synthesis under certain stress conditions. May act as a fidelity factor of the translation reaction, by catalyzing a one-codon backward translocation of tRNAs on improperly translocated ribosomes. Back-translocation proceeds from a post-translocation (POST) complex to a pre-translocation (PRE) complex, thus giving elongation factor G a second chance to translocate the tRNAs correctly. Binds to ribosomes in a GTP-dependent manner. The protein is Elongation factor 4 of Neisseria meningitidis serogroup A / serotype 4A (strain DSM 15465 / Z2491).